The chain runs to 261 residues: MGHEQNQGAALLQMLPLLWLLPHSWAVPEAPTPMWPDDLQNHTFLHTVYCQDGSPSVGLSEAYDEDQLFFFDFSQNTRVPRLPEFADWAQEQGDAPAILFDKEFCEWMIQQIGPKLDGKIPVSRGFPIAEVFTLKPLEFGKPNTLVCFVSNLFPPMLTVNWQHHSVPVEGFGPTFVSAVDGLSFQAFSYLNFTPEPSDIFSCIVTHEIDRYTAIAYWVPRNALPSDLLENVLCGVAFGLGVLGIIVGIVLIIYFRKPCSGD.

Residues 1-26 (MGHEQNQGAALLQMLPLLWLLPHSWA) form the signal peptide. Residues 27 to 124 (VPEAPTPMWP…KLDGKIPVSR (98 aa)) are alpha-1. The Lumenal segment spans residues 27–233 (VPEAPTPMWP…PSDLLENVLC (207 aa)). N41 carries N-linked (GlcNAc...) asparagine glycosylation. 2 disulfide bridges follow: C50/C105 and C147/C202. The 95-residue stretch at 121–215 (PVSRGFPIAE…HEIDRYTAIA (95 aa)) folds into the Ig-like C1-type domain. The alpha-2 stretch occupies residues 125–217 (GFPIAEVFTL…IDRYTAIAYW (93 aa)). Residues 218–233 (VPRNALPSDLLENVLC) are connecting peptide. A helical transmembrane segment spans residues 234-254 (GVAFGLGVLGIIVGIVLIIYF). Over 255-261 (RKPCSGD) the chain is Cytoplasmic.

The protein belongs to the MHC class II family. As to quaternary structure, heterodimer of an alpha chain (DMA) and a beta chain (DMB). Interacts with MHCII; this interaction mediates rapid selection of high-affinity peptides in a pH-dependent manner, with an optimum at pH 5.5.

The protein resides in the late endosome membrane. It is found in the lysosome membrane. Plays a critical role in catalyzing the release of class II-associated invariant chain peptide (CLIP) from newly synthesized MHC class II molecules and freeing the peptide binding site for acquisition of antigenic peptides. In B-cells, the interaction between HLA-DM and MHC class II molecules is regulated by HLA-DO. This is HLA class II histocompatibility antigen, DM alpha chain (HLA-DMA) from Homo sapiens (Human).